The following is a 1128-amino-acid chain: Nck-associated protein 1 (1128 aa).

Ser2 is subject to N-acetylserine. Positions 640-665 are disordered; the sequence is AVNKKSKKQTGKKGEPEREKPGVESM. Residues 651–665 show a composition bias toward basic and acidic residues; that stretch reads KKGEPEREKPGVESM. The chain crosses the membrane as a helical span at residues 995–1015; sequence IACLLMVFVAVSLPTLASNVM.

Belongs to the HEM-1/HEM-2 family. As to quaternary structure, component of the WAVE1 complex composed of ABI2, CYFIP1 or CYFIP2, BRK1, NCKAP1 and WASF1/WAVE1. Within the complex, a heterodimer containing NCKAP1 and CYFIP1 interacts with a heterotrimer formed by WAVE1, ABI2 and BRK1. Component of the WAVE2 complex composed of ABI1, CYFIP1/SRA1, NCKAP1/NAP1 and WASF2/WAVE2. CYFIP2 binds to activated RAC1 which causes the complex to dissociate, releasing activated WASF1. The complex can also be activated by NCK1. Associates preferentially with the first SH3 domain of NCK. Interacts with NYAP1, NYAP2 and MYO16. Interacts with TMEM132D. In terms of assembly, (Microbial infection) Interacts with human cytomegalovirus protein UL135. As to expression, expressed in all tissues examined except peripheral blood leukocytes, with highest expression in brain, heart, and skeletal muscle. Expressed in cells of various brain regions including Purkinje cells and dentate nucleus of the cerebellum, CA4 region and dentate gyrus of the hippocampus, and in frontal gray and white matter.

The protein localises to the cell membrane. It is found in the cell projection. It localises to the lamellipodium membrane. In terms of biological role, part of the WAVE complex that regulates lamellipodia formation. The WAVE complex regulates actin filament reorganization via its interaction with the Arp2/3 complex. Actin remodeling activity is regulated by RAC1. As component of the WAVE1 complex, required for BDNF-NTRK2 endocytic trafficking and signaling from early endosomes. The polypeptide is Nck-associated protein 1 (NCKAP1) (Homo sapiens (Human)).